We begin with the raw amino-acid sequence, 234 residues long: Coiled-coil domain-containing protein 194 (234 aa).

The first 42 residues, 1 to 42 (MAEPGPEPGRAWRVLALCGVAVFLAAAAAGGALVAWNLAASA), serve as a signal peptide directing secretion. Disordered regions lie at residues 44-67 (RGPR…PGVD) and 187-234 (VLEA…RARG). A coiled-coil region spans residues 66–163 (VDDLRRRLAE…TRRLDEALRR (98 aa)). A compositionally biased stretch (low complexity) spans 187–196 (VLEAEMSPQR). Basic residues predominate over residues 197–217 (RVPRPRPRSGSRPRPSPRSRS).

This chain is Coiled-coil domain-containing protein 194, found in Homo sapiens (Human).